A 284-amino-acid chain; its full sequence is Bifunctional protein FolD (284 aa).

NADP(+) is bound by residues 166–168 (GAS) and isoleucine 232.

It belongs to the tetrahydrofolate dehydrogenase/cyclohydrolase family. As to quaternary structure, homodimer.

It catalyses the reaction (6R)-5,10-methylene-5,6,7,8-tetrahydrofolate + NADP(+) = (6R)-5,10-methenyltetrahydrofolate + NADPH. The enzyme catalyses (6R)-5,10-methenyltetrahydrofolate + H2O = (6R)-10-formyltetrahydrofolate + H(+). It participates in one-carbon metabolism; tetrahydrofolate interconversion. Catalyzes the oxidation of 5,10-methylenetetrahydrofolate to 5,10-methenyltetrahydrofolate and then the hydrolysis of 5,10-methenyltetrahydrofolate to 10-formyltetrahydrofolate. This Shewanella pealeana (strain ATCC 700345 / ANG-SQ1) protein is Bifunctional protein FolD.